The primary structure comprises 136 residues: Large ribosomal subunit protein uL16 (136 aa).

Belongs to the universal ribosomal protein uL16 family. As to quaternary structure, part of the 50S ribosomal subunit.

Functionally, binds 23S rRNA and is also seen to make contacts with the A and possibly P site tRNAs. The polypeptide is Large ribosomal subunit protein uL16 (Buchnera aphidicola subsp. Baizongia pistaciae (strain Bp)).